Reading from the N-terminus, the 38-residue chain is Esterase-5 (38 aa).

Residues 1-38 (SAAADPLIVELPNGKVRGRDNEGYYEAEGIPRAEPPVG) are disordered.

This sequence belongs to the type-B carboxylesterase/lipase family.

The catalysed reaction is a carboxylic ester + H2O = an alcohol + a carboxylate + H(+). The polypeptide is Esterase-5 (Est-5) (Drosophila mojavensis (Fruit fly)).